The chain runs to 432 residues: C(50) beta-cyclic carotenoids biosynthesis protein LbtBC (432 aa).

The beta-cyclase stretch occupies residues 1–140 (MTSLYTTLNL…DDDEVRTPER (140 aa)). Helical transmembrane passes span 4–24 (LYTT…LLAA), 36–56 (LIGV…FDNI), and 83–103 (FAYA…LTAS). The tract at residues 111-140 (GSPTVSGRGDALLTRAPEPGDDDEVRTPER) is disordered. Positions 141–432 (PGTPGLLTTL…IVLWSVLVWS (292 aa)) are elongase/hydratase. The next 7 helical transmembrane spans lie at 170-190 (YFLA…FFLV), 252-272 (ESSL…AKGL), 277-297 (IPFL…IVGW), 299-319 (IAGA…MLWG), 350-370 (AAVW…LAAA), 374-394 (ASGA…YVGV), and 409-429 (FLVL…WSVL).

The protein belongs to the UbiA prenyltransferase family. May form a complex with LbtA.

It is found in the cell membrane. It carries out the reaction all-trans-lycopene + dimethylallyl diphosphate + H2O = dihydroisopentenyldehydrorhodopin + diphosphate. The enzyme catalyses isopentenyldehydrorhodopin + dimethylallyl diphosphate + H2O = dihydrobisanhydrobacterioruberin + diphosphate. It functions in the pathway carotenoid biosynthesis. Its function is as follows. Involved in the biosynthesis of C(50) beta-cyclic carotenoids. The elongase/hydratase domain catalyzes the elongation of lycopene by attaching a C(5) isoprene unit at C-2, as well as the hydroxylation of the previous end of the molecule. The enzyme acts at both ends of the substrate, and catalyzes the conversion of lycopene to the C(45) intermediate dihydroisopentenyldehydrorhodopin (DH-IDR) and the conversion of isopentenyldehydrorhodopin (IDR) to the C(50) carotenoid dihydrobisanhydrobacterioruberin (DH-BABR). The beta-cyclase domain may produce the C(50) beta-cyclic carotenoid C.p.450 from the C(50) carotenoid dihydrobisanhydrobacterioruberin (DH-BABR). The sequence is that of C(50) beta-cyclic carotenoids biosynthesis protein LbtBC from Dietzia sp. (strain CQ4).